The chain runs to 329 residues: Phosphate acyltransferase (329 aa).

This sequence belongs to the PlsX family. Homodimer. Probably interacts with PlsY.

It localises to the cytoplasm. The enzyme catalyses a fatty acyl-[ACP] + phosphate = an acyl phosphate + holo-[ACP]. It participates in lipid metabolism; phospholipid metabolism. Catalyzes the reversible formation of acyl-phosphate (acyl-PO(4)) from acyl-[acyl-carrier-protein] (acyl-ACP). This enzyme utilizes acyl-ACP as fatty acyl donor, but not acyl-CoA. The chain is Phosphate acyltransferase from Geobacillus sp. (strain WCH70).